We begin with the raw amino-acid sequence, 1757 residues long: Serine/threonine-protein kinase WNK3 (1757 aa).

The disordered stretch occupies residues 1 to 25; that stretch reads MATDSGEPASTEDSEKPDGVSFENR. Serine 62 is modified (phosphoserine). Basic and acidic residues predominate over residues 66-82; sequence TEDDKVAESSRRDERKA. Residues 66 to 85 are disordered; that stretch reads TEDDKVAESSRRDERKAATN. Residues 146–404 enclose the Protein kinase domain; that stretch reads LKFDIELGRG…IKDLLNHAFF (259 aa). ATP-binding positions include 226–229 and lysine 276; that span reads TELM. Aspartate 293 (proton acceptor) is an active-site residue. Phosphoserine; by autocatalysis is present on residues serine 303 and serine 307. The tract at residues 536–546 is interaction with KLHL3; that stretch reads EYEETEVDQHV. Threonine 540 bears the Phosphothreonine mark. 3 stretches are compositionally biased toward polar residues: residues 551–570, 578–604, and 674–689; these read LQGK…SSEP, SDTS…KLTQ, and SVKE…SGNG. Disordered stretches follow at residues 551 to 604 and 674 to 705; these read LQGK…KLTQ and SVKE…PRPE. Serine 1039 is subject to Phosphoserine. The span at 1404–1422 shows a compositional bias: polar residues; the sequence is VATEKNVTSTTEVSVQSGS. Disordered regions lie at residues 1404 to 1440, 1479 to 1498, and 1536 to 1574; these read VATE…QTCT, SLFY…EIED, and ATKD…MTHS. A compositionally biased stretch (low complexity) spans 1479–1491; that stretch reads SLFYSPSSPMSSD. 2 positions are modified to phosphoserine: serine 1550 and serine 1553. The span at 1555 to 1566 shows a compositional bias: basic residues; sequence RRPRSFKSKLRS. Serine 1595 bears the Phosphoserine mark. Disordered stretches follow at residues 1621-1650 and 1734-1757; these read HFPS…CEST and PGMN…PGPK. Low complexity predominate over residues 1624–1637; it reads SKPSLNQLKQSQQK. The span at 1641–1650 shows a compositional bias: polar residues; sequence ENWNKSCEST. A compositionally biased stretch (pro residues) spans 1742-1757; sequence PAPPVQNPASIPPGPK.

It belongs to the protein kinase superfamily. Ser/Thr protein kinase family. WNK subfamily. As to quaternary structure, interacts with WNK1 and WNK4. It depends on Mg(2+) as a cofactor. Autophosphorylated at Ser-303 and Ser-307, promoting its activity. Phosphorylation at Thr-540 prevents interaction with KLHL3 and subsequent ubiquitination and degradation by the BCR(KLHL3) complex. In terms of processing, ubiquitinated by the BCR(KLHL2) complex, leading to its degradation. Ubiquitinated by the BCR(KLHL3) complex, leading to its degradation. As to expression, expressed in pancreatic duct.

Its subcellular location is the cytoplasm. It carries out the reaction L-seryl-[protein] + ATP = O-phospho-L-seryl-[protein] + ADP + H(+). The enzyme catalyses L-threonyl-[protein] + ATP = O-phospho-L-threonyl-[protein] + ADP + H(+). With respect to regulation, activated in response to hyperosmotic stress: cell shrinkage promotes formation of a membraneless compartment that concentrates WNK3 with its substrates, OXSR1/OSR1 and STK39/SPAK. Activation requires autophosphorylation of Ser-307 and, to a lower extent, Ser-303. Autophosphorylation and subsequent activation is inhibited by increases in intracellular ionic strength: Cl(-) potently inhibits WNK3 kinase activity via direct binding. Also inhibited by K(+) ions. Kinase activity is inhibited by WNK4. Serine/threonine-protein kinase component of the WNK3-SPAK/OSR1 kinase cascade, which plays an important role in the regulation of electrolyte homeostasis and regulatory volume increase in response to hyperosmotic stress. WNK3 mediates regulatory volume increase in response to hyperosmotic stress by acting as a molecular crowding sensor, which senses cell shrinkage and mediates formation of a membraneless compartment by undergoing liquid-liquid phase separation. The membraneless compartment concentrates WNK3 with its substrates, OXSR1/OSR1 and STK39/SPAK, promoting WNK3-dependent phosphorylation and activation of downstream kinases OXSR1/OSR1 and STK39/SPAK. Following activation, OXSR1/OSR1 and STK39/SPAK catalyze phosphorylation of ion cotransporters SLC12A1/NKCC2, SLC12A2/NKCC1, SLC12A3/NCC, SLC12A4/KCC1, SLC12A5/KCC2 or SLC12A6/KCC3, regulating their activity. Phosphorylation of Na-K-Cl cotransporters SLC12A2/NKCC1 and SLC12A2/NKCC1 promote their activation and ion influx; simultaneously, phosphorylation of K-Cl cotransporters SLC12A4/KCC1, SLC12A5/KCC2 and SLC12A6/KCC3 inhibits its activity, blocking ion efflux. Phosphorylates WNK4, possibly regulating the activity of SLC12A3/NCC. May also phosphorylate NEDD4L. Also acts as a scaffold protein independently of its protein kinase activity: negatively regulates cell membrane localization of various transporters and channels, such as KCNJ1 and SLC26A9. Increases Ca(2+) influx mediated by TRPV5 and TRPV6 by enhancing their membrane expression level via a kinase-dependent pathway. This chain is Serine/threonine-protein kinase WNK3, found in Mus musculus (Mouse).